The chain runs to 396 residues: MLDNQTIATVKSTIPLLSATGPKLTAHFYERMFKHNPELKNIFNMSHQLNGDQREALFNAICAYAANIDNLKVLLPAVEKIAHKHASLNIQPEHYQIVGTHLLATLNEMFQPGNEILDAWGKAYGVLADIFINREEQIYHSGELTDGGWRGLRPFRINRKEVKSEVICSFEFAPQDGGKVMDYKPGQYLSIYLQDDSFANREIRQYSLTAAPNGSSYRIAIKREPQGIVSNHMHDKMQEGDTVWLTAPRGDFFLDIKPETPVTLISAGVGLTPMMSMLYHLHQQNHNSPINWLHAAEHGGHHAFSHEVAAIAQAMPNFAGTIWYREPRDEDQQGIHYQHKGFMDLTVLNEALKTEGMHFYFCGPVAFMQYVAKQLLDMGIDKQFIHYECFGPHKVI.

In terms of domain architecture, Globin spans 1 to 136 (MLDNQTIATV…LADIFINREE (136 aa)). H85 contributes to the heme b binding site. Active-site charge relay system residues include Y95 and E135. The reductase stretch occupies residues 147–396 (GGWRGLRPFR…YECFGPHKVI (250 aa)). In terms of domain architecture, FAD-binding FR-type spans 150 to 255 (RGLRPFRINR…TAPRGDFFLD (106 aa)). FAD-binding positions include Y188 and 204–207 (RQYS). 268–273 (GVGLTP) is a binding site for NADP(+). FAD is bound at residue 389-392 (CFGP).

It belongs to the globin family. Two-domain flavohemoproteins subfamily. This sequence in the C-terminal section; belongs to the flavoprotein pyridine nucleotide cytochrome reductase family. The cofactor is heme b. FAD serves as cofactor.

The enzyme catalyses 2 nitric oxide + NADPH + 2 O2 = 2 nitrate + NADP(+) + H(+). It carries out the reaction 2 nitric oxide + NADH + 2 O2 = 2 nitrate + NAD(+) + H(+). In terms of biological role, is involved in NO detoxification in an aerobic process, termed nitric oxide dioxygenase (NOD) reaction that utilizes O(2) and NAD(P)H to convert NO to nitrate, which protects the bacterium from various noxious nitrogen compounds. Therefore, plays a central role in the inducible response to nitrosative stress. This chain is Flavohemoprotein, found in Photorhabdus laumondii subsp. laumondii (strain DSM 15139 / CIP 105565 / TT01) (Photorhabdus luminescens subsp. laumondii).